A 550-amino-acid polypeptide reads, in one-letter code: Arginine--tRNA ligase (550 aa).

The short motif at 130-140 is the 'HIGH' region element; the sequence is ANPTGPIHIGG.

This sequence belongs to the class-I aminoacyl-tRNA synthetase family. As to quaternary structure, monomer.

It is found in the cytoplasm. It catalyses the reaction tRNA(Arg) + L-arginine + ATP = L-arginyl-tRNA(Arg) + AMP + diphosphate. The protein is Arginine--tRNA ligase of Mycobacterium marinum (strain ATCC BAA-535 / M).